The primary structure comprises 274 residues: Bis(5'-nucleosyl)-tetraphosphatase, symmetrical (274 aa).

Belongs to the Ap4A hydrolase family.

The catalysed reaction is P(1),P(4)-bis(5'-adenosyl) tetraphosphate + H2O = 2 ADP + 2 H(+). Functionally, hydrolyzes diadenosine 5',5'''-P1,P4-tetraphosphate to yield ADP. This chain is Bis(5'-nucleosyl)-tetraphosphatase, symmetrical (apaH), found in Buchnera aphidicola subsp. Acyrthosiphon pisum (strain APS) (Acyrthosiphon pisum symbiotic bacterium).